Here is a 475-residue protein sequence, read N- to C-terminus: Ataxin-10 (475 aa).

R10 is subject to Omega-N-methylarginine. A phosphoserine mark is found at S12 and S77. At T82 the chain carries Phosphothreonine. Phosphoserine is present on S430.

This sequence belongs to the ataxin-10 family. As to quaternary structure, homooligomer. Interacts with GNB2. Interacts with IQCB1. Interacts with OGT. In terms of processing, polyubiquitinated. Post-translationally, phosphorylation at Ser-12 by AURKB promotes the association of ATXN10 with PLK1. Phosphorylation at Ser-77 and Thr-82 by PLK1 may play a role in the regulation of cytokinesis and may stimulate the proteasome-mediated degradation of ATXN10.

Its subcellular location is the cytoplasm. The protein resides in the perinuclear region. It localises to the cytoskeleton. It is found in the cilium basal body. The protein localises to the microtubule organizing center. Its subcellular location is the centrosome. The protein resides in the centriole. It localises to the midbody. In terms of biological role, may play a role in the regulation of cytokinesis. May play a role in signaling by stimulating protein glycosylation. Induces neuritogenesis by activating the Ras-MAP kinase pathway and is necessary for the survival of cerebellar neurons. Does not appear to play a major role in ciliogenesis. This is Ataxin-10 (ATXN10) from Bos taurus (Bovine).